A 763-amino-acid chain; its full sequence is ATP-dependent RNA helicase MAK5 (763 aa).

Disordered stretches follow at residues 1-35 and 87-169; these read MVNKFLAGRLKKSKGKSFKGSSSKGNSKTVKSNNN and DTKI…DNEV. The span at 18 to 35 shows a compositional bias: low complexity; that stretch reads FKGSSSKGNSKTVKSNNN. A compositionally biased stretch (acidic residues) spans 104–114; it reads EIDEDAPENDL. A compositionally biased stretch (basic and acidic residues) spans 115-127; that stretch reads VEFKNMDDMKDGE. The segment covering 136–160 has biased composition (acidic residues); the sequence is SEAEAESEAESEEEEEKTGDDEGED. Positions 192 to 220 match the Q motif motif; sequence WTEKVGELSFTTLHGLTKLGFNKPTLIQE. The region spanning 223–411 is the Helicase ATP-binding domain; it reads IPMALKGEDI…SHASWKNMKT (189 aa). 236-243 contacts ATP; the sequence is ASTGSGKT. The DEAD box motif lies at 352-355; that stretch reads DEAD. A Helicase C-terminal domain is found at 450-619; that stretch reads QIKESLIECA…DIIMGKKKWQ (170 aa).

Belongs to the DEAD box helicase family. DDX24/MAK5 subfamily.

It is found in the nucleus. It localises to the nucleolus. The catalysed reaction is ATP + H2O = ADP + phosphate + H(+). ATP-binding RNA helicase involved in the biogenesis of 60S ribosomal subunits and is required for the normal formation of 25S and 5.8S rRNAs. The protein is ATP-dependent RNA helicase MAK5 (MAK5) of Vanderwaltozyma polyspora (strain ATCC 22028 / DSM 70294 / BCRC 21397 / CBS 2163 / NBRC 10782 / NRRL Y-8283 / UCD 57-17) (Kluyveromyces polysporus).